Here is a 255-residue protein sequence, read N- to C-terminus: Increased copper sensitivity protein 2 (255 aa).

A compositionally biased stretch (basic and acidic residues) spans 1–12; it reads MGKFEQKERERI. Disordered regions lie at residues 1 to 32 and 82 to 142; these read MGKF…KSLG and PGDK…RKSH. A compositionally biased stretch (polar residues) spans 13–30; sequence STFSFPTTGSQSSTSIKS. Residues 131-142 are compositionally biased toward basic residues; it reads SGRRKSYHRKSH. S217 carries the post-translational modification Phosphoserine.

This is Increased copper sensitivity protein 2 (ICS2) from Saccharomyces cerevisiae (strain ATCC 204508 / S288c) (Baker's yeast).